We begin with the raw amino-acid sequence, 291 residues long: ATP synthase gamma chain (291 aa).

Belongs to the ATPase gamma chain family. As to quaternary structure, F-type ATPases have 2 components, CF(1) - the catalytic core - and CF(0) - the membrane proton channel. CF(1) has five subunits: alpha(3), beta(3), gamma(1), delta(1), epsilon(1). CF(0) has three main subunits: a, b and c.

Its subcellular location is the cell membrane. In terms of biological role, produces ATP from ADP in the presence of a proton gradient across the membrane. The gamma chain is believed to be important in regulating ATPase activity and the flow of protons through the CF(0) complex. This Buchnera aphidicola subsp. Baizongia pistaciae (strain Bp) protein is ATP synthase gamma chain.